A 223-amino-acid polypeptide reads, in one-letter code: uncharacterized protein (223 aa).

This is an uncharacterized protein from Dryophytes versicolor (chameleon treefrog).